A 79-amino-acid chain; its full sequence is Acyl carrier protein (79 aa).

A Carrier domain is found at 1 to 77; the sequence is MNNVEKKIKK…KSIDYINNKN (77 aa). O-(pantetheine 4'-phosphoryl)serine is present on serine 37.

This sequence belongs to the acyl carrier protein (ACP) family. Post-translationally, 4'-phosphopantetheine is transferred from CoA to a specific serine of apo-ACP by AcpS. This modification is essential for activity because fatty acids are bound in thioester linkage to the sulfhydryl of the prosthetic group.

It is found in the cytoplasm. Its pathway is lipid metabolism; fatty acid biosynthesis. In terms of biological role, carrier of the growing fatty acid chain in fatty acid biosynthesis. In Buchnera aphidicola subsp. Schizaphis graminum (strain Sg), this protein is Acyl carrier protein.